Reading from the N-terminus, the 337-residue chain is Terpene synthase 4 (337 aa).

2 residues coordinate Mg(2+): Asp94 and Asp98. The D(D/E)XX(D/E) motif signature appears at Asp94 to Asp98. Residue Arg195 participates in substrate binding. Mg(2+) is bound by residues Asn241, Ser245, and Glu249. The NSE motif signature appears at Asn241–Glu249. The WxxxxxRY motif signature appears at Trp320–Tyr327.

This sequence belongs to the terpene synthase family. Mg(2+) is required as a cofactor.

The enzyme catalyses (2E,6E)-farnesyl diphosphate = alpha-muurolene + diphosphate. It catalyses the reaction (2E,6E)-farnesyl diphosphate = (-)-(E)-beta-caryophyllene + diphosphate. Functionally, terpene synthase that catalyzes the cyclization of farnesyl diphosphate (FPP) into alpha-muurolene, (-)-beta-caryophyllene, and one unidentified sesquiterpene. TPS4 shows only trace monoterpene synthase activity with geranyl diphosphate (GPP) as substrate and produces very small amounts of myrcene. P.polycephalum has a unique biology and these volatile terpenoids could function in internal communication of P.polycephalum, to mark the territory that have been explored, or they may be involved in chemotaxis. The chain is Terpene synthase 4 from Physarum polycephalum (Slime mold).